The sequence spans 572 residues: Mitochondrial distribution and morphology protein 34 (572 aa).

One can recognise an SMP-LTD domain in the interval Met1–Leu195. 4 disordered regions span residues Thr212–Leu236, Gly355–Asp426, His487–Arg507, and Ala552–His572. Positions Arg358–Arg370 are enriched in basic residues. Residues Val371–Asp381 are compositionally biased toward basic and acidic residues. A compositionally biased stretch (polar residues) spans Ser387–Ser400.

It belongs to the MDM34 family. Component of the ER-mitochondria encounter structure (ERMES) or MDM complex, composed of mmm1, mdm10, mdm12 and mdm34.

Its subcellular location is the mitochondrion outer membrane. In terms of biological role, component of the ERMES/MDM complex, which serves as a molecular tether to connect the endoplasmic reticulum (ER) and mitochondria. Components of this complex are involved in the control of mitochondrial shape and protein biogenesis, and function in nonvesicular lipid trafficking between the ER and mitochondria. Mdm34 is required for the interaction of the ER-resident membrane protein mmm1 and the outer mitochondrial membrane-resident beta-barrel protein mdm10. In Aspergillus fumigatus (strain ATCC MYA-4609 / CBS 101355 / FGSC A1100 / Af293) (Neosartorya fumigata), this protein is Mitochondrial distribution and morphology protein 34.